The sequence spans 725 residues: Endoglucanase G (725 aa).

Residues 1-35 (MLKTKRKLTKAIGVALSISILSSLVSFIPQTNTYA) form the signal peptide. The active-site Nucleophile is the aspartate 93. Catalysis depends on residues histidine 408, aspartate 446, and glutamate 455. In terms of domain architecture, CBM3 spans 489–650 (ITNDEVIIKA…GVKVFGNEPA (162 aa)). In terms of domain architecture, Dockerin spans 658 to 724 (PEILYGDVNS…LLGTITQLPQ (67 aa)).

This sequence belongs to the glycosyl hydrolase 9 (cellulase E) family.

The enzyme catalyses Endohydrolysis of (1-&gt;4)-beta-D-glucosidic linkages in cellulose, lichenin and cereal beta-D-glucans.. It functions in the pathway glycan metabolism; cellulose degradation. The biological conversion of cellulose to glucose generally requires three types of hydrolytic enzymes: (1) Endoglucanases which cut internal beta-1,4-glucosidic bonds; (2) Exocellobiohydrolases that cut the disaccharide cellobiose from the non-reducing end of the cellulose polymer chain; (3) Beta-1,4-glucosidases which hydrolyze the cellobiose and other short cello-oligosaccharides to glucose. The polypeptide is Endoglucanase G (celCCG) (Ruminiclostridium cellulolyticum (strain ATCC 35319 / DSM 5812 / JCM 6584 / H10) (Clostridium cellulolyticum)).